The chain runs to 161 residues: Nucleotide-binding protein Bamb_2603 (161 aa).

Belongs to the YajQ family.

Functionally, nucleotide-binding protein. This chain is Nucleotide-binding protein Bamb_2603, found in Burkholderia ambifaria (strain ATCC BAA-244 / DSM 16087 / CCUG 44356 / LMG 19182 / AMMD) (Burkholderia cepacia (strain AMMD)).